The sequence spans 24 residues: Brevinin-1Pc (24 aa).

Cysteines 18 and 24 form a disulfide.

Expressed by the skin glands.

The protein resides in the secreted. Its function is as follows. Antibacterial activity against Gram-positive bacterium S.aureus and Gram-negative bacterium E.coli. Has activity against C.albicans. This is Brevinin-1Pc from Lithobates pipiens (Northern leopard frog).